The following is a 460-amino-acid chain: WD repeat-containing protein 41 (460 aa).

WD repeat units follow at residues 40 to 79, 82 to 128, 131 to 168, 220 to 258, 321 to 359, and 403 to 441; these read EAHRDIVRFLVRLDDFRFASAGDDGIIVVWNAQTGEKLLE, GHTQ…QIQR, CFQSTVKCLTVLQRLDIWLSGGSDLGVWNRKLDLLCKT, DHQDNILSLANINDTGFVTGSHVGELLIWDALDWTVQAC, AHDSNILHIDKLPNRQLISCSEDGAVRMWEVREKQQLAA, and GHSSSVEMFLYFEDHGLVTCSADHLIILWKNGERESGVR.

In terms of assembly, component of the C9orf72-SMCR8 complex, at least composed of C9orf72, SMCR8 and WDR41. The complex is formed of two protomers, each individually consisting of one molecule each of C9orf72, SMCR8 and WDR41. The protomers homodimerize via an interaction between C9orf72 (via C-terminus) and SMCR8 (via N-terminus). Within each protomer SMCR8 (via DENN domain) acts as a bridging protein between WDR41 (via C-terminus and N-terminus) and C9orf72 (via C-terminus). The C9orf72-SMCR8 complex associates with the ULK1/ATG1 kinase complex.

Its subcellular location is the cytoplasm. Functionally, non-catalytic component of the C9orf72-SMCR8 complex, a complex that has guanine nucleotide exchange factor (GEF) activity and regulates autophagy. The C9orf72-SMCR8 complex promotes the exchange of GDP to GTP, converting inactive GDP-bound RAB8A and RAB39B into their active GTP-bound form, thereby promoting autophagosome maturation. As part of the C9orf72-SMCR8 complex, stimulates RAB8A and RAB11A GTPase activity in vitro, however WDR42 is shown not be an essential complex component for this function. The C9orf72-SMCR8 complex also acts as a negative regulator of autophagy initiation by interacting with the ULK1/ATG1 kinase complex and inhibiting its protein kinase activity. The protein is WD repeat-containing protein 41 of Mus musculus (Mouse).